The sequence spans 202 residues: Large ribosomal subunit protein uL4 (202 aa).

Residues 42 to 52 (GTKAQKSRSQV) are compositionally biased toward polar residues. A disordered region spans residues 42 to 70 (GTKAQKSRSQVSGTTKKSKKQKGGGARHG).

The protein belongs to the universal ribosomal protein uL4 family. Part of the 50S ribosomal subunit.

Functionally, one of the primary rRNA binding proteins, this protein initially binds near the 5'-end of the 23S rRNA. It is important during the early stages of 50S assembly. It makes multiple contacts with different domains of the 23S rRNA in the assembled 50S subunit and ribosome. Its function is as follows. Forms part of the polypeptide exit tunnel. This Xylella fastidiosa (strain Temecula1 / ATCC 700964) protein is Large ribosomal subunit protein uL4.